The chain runs to 362 residues: 3-isopropylmalate dehydrogenase (362 aa).

Residue glycine 78–glutamate 91 coordinates NAD(+). Substrate contacts are provided by arginine 99, arginine 109, arginine 138, and aspartate 227. Positions 227, 251, and 255 each coordinate Mg(2+). Glycine 285–asparagine 297 is a binding site for NAD(+).

Belongs to the isocitrate and isopropylmalate dehydrogenases family. LeuB type 1 subfamily. In terms of assembly, homodimer. It depends on Mg(2+) as a cofactor. Mn(2+) serves as cofactor.

The protein localises to the cytoplasm. The enzyme catalyses (2R,3S)-3-isopropylmalate + NAD(+) = 4-methyl-2-oxopentanoate + CO2 + NADH. It functions in the pathway amino-acid biosynthesis; L-leucine biosynthesis; L-leucine from 3-methyl-2-oxobutanoate: step 3/4. In terms of biological role, catalyzes the oxidation of 3-carboxy-2-hydroxy-4-methylpentanoate (3-isopropylmalate) to 3-carboxy-4-methyl-2-oxopentanoate. The product decarboxylates to 4-methyl-2 oxopentanoate. This chain is 3-isopropylmalate dehydrogenase, found in Geobacter metallireducens (strain ATCC 53774 / DSM 7210 / GS-15).